A 185-amino-acid chain; its full sequence is Ribosome-recycling factor (185 aa).

The segment at 128–158 (VRNTRQDANNKVKKLEKDKEISEDESKKAQE) is disordered.

Belongs to the RRF family.

Its subcellular location is the cytoplasm. In terms of biological role, responsible for the release of ribosomes from messenger RNA at the termination of protein biosynthesis. May increase the efficiency of translation by recycling ribosomes from one round of translation to another. The protein is Ribosome-recycling factor of Helicobacter pylori (strain J99 / ATCC 700824) (Campylobacter pylori J99).